The chain runs to 417 residues: NADH-quinone oxidoreductase subunit D (417 aa).

Belongs to the complex I 49 kDa subunit family. As to quaternary structure, NDH-1 is composed of 14 different subunits. Subunits NuoB, C, D, E, F, and G constitute the peripheral sector of the complex.

It is found in the cell inner membrane. It catalyses the reaction a quinone + NADH + 5 H(+)(in) = a quinol + NAD(+) + 4 H(+)(out). In terms of biological role, NDH-1 shuttles electrons from NADH, via FMN and iron-sulfur (Fe-S) centers, to quinones in the respiratory chain. The immediate electron acceptor for the enzyme in this species is believed to be ubiquinone. Couples the redox reaction to proton translocation (for every two electrons transferred, four hydrogen ions are translocated across the cytoplasmic membrane), and thus conserves the redox energy in a proton gradient. This chain is NADH-quinone oxidoreductase subunit D, found in Acidithiobacillus ferrooxidans (strain ATCC 53993 / BNL-5-31) (Leptospirillum ferrooxidans (ATCC 53993)).